A 218-amino-acid chain; its full sequence is Small ribosomal subunit protein uS3c (218 aa).

In terms of domain architecture, KH type-2 spans 39–120 (IRNFMNKELL…IITCKVVGVT (82 aa)).

This sequence belongs to the universal ribosomal protein uS3 family. In terms of assembly, part of the 30S ribosomal subunit.

It localises to the plastid. It is found in the chloroplast. The polypeptide is Small ribosomal subunit protein uS3c (rps3) (Euglena gracilis).